Here is a 1149-residue protein sequence, read N- to C-terminus: Transforming acidic coiled-coil-containing protein 2 (1149 aa).

Disordered stretches follow at residues 1 to 73 (MGNE…GSNQ), 91 to 227 (SASP…ASSG), and 247 to 430 (PCSA…VPLT). Polar residues predominate over residues 13–35 (TSSVQSPRSLQPPGKSQSLQKQQ). Over residues 91–106 (SASPSAARASPAPLAP) the composition is skewed to low complexity. A Phosphoserine modification is found at Ser-100. Residues 155–180 (KAPPAPPPPPPEVTPEPEVIDPPAPE) show a composition bias toward pro residues. At Ser-265 the chain carries Phosphoserine. Polar residues-rich tracts occupy residues 267 to 284 (ESVP…SLQA) and 300 to 317 (TLTT…SSTL). The span at 318 to 334 (KRTKKTRPPSLKKKQAT) shows a compositional bias: basic residues. Ser-354 carries the post-translational modification Phosphoserine. Positions 358–368 (SEEHLAPETKT) are enriched in basic and acidic residues. Phosphoserine is present on Ser-419. Position 439 is a phosphothreonine (Thr-439). The disordered stretch occupies residues 463-617 (SEDKGSWESQ…PAKKKKTPLK (155 aa)). Basic residues predominate over residues 481 to 498 (KIGKKPVAKMPLRRPKMK). The SPAZ domain maps to 508–596 (PASPPRSPTE…SPASFEIPAS (89 aa)). A phosphoserine mark is found at Ser-510 and Ser-514. The residue at position 516 (Thr-516) is a Phosphothreonine. Polar residues predominate over residues 541-561 (NPFSSTSKMQESPKLSQQSYN). Phosphoserine is present on residues Ser-552, Ser-582, Ser-585, Ser-587, and Ser-596. Residues 575–590 (KASSKTPSSPSKSPAS) are compositionally biased toward low complexity. Thr-632, Thr-653, and Thr-657 each carry phosphothreonine. Disordered regions lie at residues 636 to 665 (KKSP…SAIS) and 696 to 719 (DFPQ…SEEL). A compositionally biased stretch (low complexity) spans 652-665 (PTPAATPEAPSAIS). Polar residues predominate over residues 701–716 (SDLSNFVNETKFNSPS). 2 positions are modified to phosphoserine: Ser-714 and Ser-736. Thr-755 carries the phosphothreonine modification. The tract at residues 756 to 780 (PQESPVKSPPVRMSDSPTPCSGSSF) is disordered. Residues Ser-759 and Ser-771 each carry the phosphoserine modification. The segment covering 770–780 (DSPTPCSGSSF) has biased composition (polar residues). Coiled-coil stretches lie at residues 877–905 (AQKL…LASR) and 948–1148 (DLDS…KMGK).

It belongs to the TACC family. As to quaternary structure, interacts with microtubules. Interacts with YEATS4, GCN5L2 and PCAF. Interacts with CCDC100/CEP120. Post-translationally, phosphorylated; which is required for localization in centrosome. As to expression, expressed in brain, kidney, lung, thymus and ovary. Not detectable in normal tissues at protein level.

The protein localises to the cytoplasm. It localises to the nucleus. It is found in the cytoskeleton. Its subcellular location is the microtubule organizing center. The protein resides in the centrosome. Functionally, plays a role in the microtubule-dependent coupling of the nucleus and the centrosome. Involved in the processes that regulate centrosome-mediated interkinetic nuclear migration (INM) of neural progenitors. May play a role in organizing centrosomal microtubules. This chain is Transforming acidic coiled-coil-containing protein 2 (Tacc2), found in Mus musculus (Mouse).